Here is a 248-residue protein sequence, read N- to C-terminus: Small ribosomal subunit protein uS3 (248 aa).

Positions 39–108 (IRKLVSQKLA…TVAVNVAEIP (70 aa)) constitute a KH type-2 domain. Positions 212 to 248 (KTETLARPPRKSDERRREDGERPSRRRPTARRRPGGE) are disordered. Over residues 221–234 (RKSDERRREDGERP) the composition is skewed to basic and acidic residues. Positions 235–248 (SRRRPTARRRPGGE) are enriched in basic residues.

Belongs to the universal ribosomal protein uS3 family. In terms of assembly, part of the 30S ribosomal subunit. Forms a tight complex with proteins S10 and S14.

Its function is as follows. Binds the lower part of the 30S subunit head. Binds mRNA in the 70S ribosome, positioning it for translation. This chain is Small ribosomal subunit protein uS3, found in Deinococcus geothermalis (strain DSM 11300 / CIP 105573 / AG-3a).